The following is a 585-amino-acid chain: Glucose oxidase-like protein fsoC (585 aa).

Ala-104 is a binding site for FAD. The active-site Proton donor is the His-521. His-564 functions as the Proton acceptor in the catalytic mechanism.

Belongs to the GMC oxidoreductase family. In terms of assembly, monomer. It depends on FAD as a cofactor.

In terms of biological role, glucose oxidase-like protein; part of the gene cluster that mediates the biosynthesis of the enfumafungin-type antibiotic fuscoatroside. Four enzymes are sufficient to produce fuscoatroside: the terpene cyclase-glycosyl transferase fusion protein fsoAthe cytochrome P450 monoxygenases fsoD and fsoE, and the acetyltransferase fsoF; the cytochrome P450 monooxygenase fsoB and the glucose oxidase-like protein fsoC do not seem to play a role in biosynthesis of fuscoatroside. Functionally, glucose oxidase; part of the gene cluster that mediates the biosynthesis of the enfumafungin-type antibiotic, fuscoatroside. The sequence is that of Glucose oxidase-like protein fsoC from Humicola fuscoatra.